Here is a 179-residue protein sequence, read N- to C-terminus: Large ribosomal subunit protein uL5 (179 aa).

This sequence belongs to the universal ribosomal protein uL5 family. Part of the 50S ribosomal subunit; part of the 5S rRNA/L5/L18/L25 subcomplex. Contacts the 5S rRNA and the P site tRNA. Forms a bridge to the 30S subunit in the 70S ribosome.

Functionally, this is one of the proteins that bind and probably mediate the attachment of the 5S RNA into the large ribosomal subunit, where it forms part of the central protuberance. In the 70S ribosome it contacts protein S13 of the 30S subunit (bridge B1b), connecting the 2 subunits; this bridge is implicated in subunit movement. Contacts the P site tRNA; the 5S rRNA and some of its associated proteins might help stabilize positioning of ribosome-bound tRNAs. This Synechococcus sp. (strain CC9605) protein is Large ribosomal subunit protein uL5.